We begin with the raw amino-acid sequence, 200 residues long: Putative hydrolase MhqD (200 aa).

Active-site charge relay system residues include Ser-100, Asp-150, and His-181.

It belongs to the AB hydrolase superfamily. AB hydrolase 2 family.

The protein localises to the cytoplasm. Putative hydrolase that may contribute to the degradation of aromatic compounds. The protein is Putative hydrolase MhqD (mhqD) of Bacillus subtilis (strain 168).